An 88-amino-acid polypeptide reads, in one-letter code: Small ribosomal subunit protein bS20 (88 aa).

The segment at 1 to 22 is disordered; that stretch reads MANTPSAKKAVNKIAKRTQVNK.

It belongs to the bacterial ribosomal protein bS20 family.

Binds directly to 16S ribosomal RNA. The sequence is that of Small ribosomal subunit protein bS20 from Bartonella bacilliformis (strain ATCC 35685 / KC583 / Herrer 020/F12,63).